The primary structure comprises 427 residues: Chitin disaccharide deacetylase (427 aa).

A signal peptide spans 1–22 (MKLNKLAIATLVSAALSQYAFA). The region spanning 28–326 (GTIYLTFDDG…LAKQAGYVFD (299 aa)) is the NodB homology domain. Chitin-binding type-3 domains lie at 333 to 375 (PNWQ…SSLW) and 382 to 419 (TNWT…TPNS).

Belongs to the polysaccharide deacetylase family. Carbohydrate-binding module 12 subfamily.

The enzyme catalyses N,N'-diacetylchitobiose + H2O = N-acetyl-beta-D-glucosaminyl-(1-&gt;4)-D-glucosamine + acetate. It participates in glycan degradation; chitin degradation. In terms of biological role, specifically catalyzes the degradation of N,N'-diacetylchitobiose. Key enzyme in the chitin catabolic cascade. This Vibrio alginolyticus protein is Chitin disaccharide deacetylase (deaA).